A 411-amino-acid polypeptide reads, in one-letter code: POU domain, class 4, transcription factor 2 (411 aa).

The disordered stretch occupies residues 29–95; the sequence is LHSASPGSSA…SEAMRRACLP (67 aa). The span at 31 to 52 shows a compositional bias: low complexity; the sequence is SASPGSSAPAAPSASSPSSSSN. Gly residues-rich tracts occupy residues 53-68 and 76-86; these read AGGG…GGGR and GSGGSGGGGGS. A required for transcriptional activation region spans residues 93-239; that stretch reads CLPTPPSNIF…MHQAALSMAH (147 aa). The short motif at 112–121 is the POU-IV box element; the sequence is RAEALAAVDI. Residues 154–168 show a composition bias toward low complexity; sequence SAASSSSVPISHPSA. The disordered stretch occupies residues 154–190; sequence SAASSSSVPISHPSALAGTHHHHHHHHHHHHQPHQAL. The segment covering 172–186 has biased composition (basic residues); sequence THHHHHHHHHHHHQP. The Nuclear speckle targeting signal motif lies at 173 to 187; sequence HHHHHHHHHHHHQPH. The tract at residues 240-411 is required for DNA-binding and transcriptional repression; that stretch reads AHGLPSHMGC…QKRMKYSAGI (172 aa). In terms of domain architecture, POU-specific spans 252–329; it reads DVDADPRDLE…ILQAWLEEAE (78 aa). Positions 347 to 406 form a DNA-binding region, homeobox; that stretch reads KKRKRTSIAAPEKRSLEAYFAIQPRPSSEKIAAIAEKLDLKKNVVRVWFCNQRQKQKRMK.

Belongs to the POU transcription factor family. Class-4 subfamily. In terms of assembly, isoform 2: Interacts with POU4F1 isoform 1; this interaction inhibits both POU4F1 DNA-binding and transcriptional activities. Isoform 2: Interacts (C-terminus) with ESR1 (via DNA-binding domain); this interaction increases the estrogen receptor ESR1 transcriptional activity in a DNA- and ligand 17-beta-estradiol-independent manner. Isoform 2: Interacts (via C-terminus) with TP53 (via N-terminus). Interacts with DLX1 (via homeobox DNA-binding domain); this interaction suppresses DLX1-mediated transcriptional activity in postnatal retina enhancing retinal ganglion cell (RGC) differentiation. Interacts with DLX2 (via homeobox DNA-binding domain); this interaction enhances RGC differentiation. Isoform 1: Interacts (via C-terminus) with ISL1 (via C-terminus). Isoform 1: Interacts with ISL2. Isoform 1: Interacts with LHX2. As to expression, expressed in retinal ganglion cells (RGCs). Expressed in mature osteoclasts. Expressed in cells of layers of the superior colliculus and the adjacent periaqueductal gray (at protein level). Expressed in the brain, peripheral sensory nervous system and retina. Expressed in the optical, intermediate, and deep gray areas of the superior colliculus, the dorsal column of the mesencephalic and pontine central gray, and the lateral interpeduncular nucleus of the brain. Expressed predominantly in postmitotic, terminally differentiated neurons. Expressed in ganglion cell layer (GCL) of the retina.

It is found in the nucleus. Its subcellular location is the nucleus speckle. The protein resides in the cytoplasm. In terms of biological role, tissue-specific DNA-binding transcription factor involved in the development and differentiation of target cells. Functions either as activator or repressor by modulating the rate of target gene transcription through RNA polymerase II enzyme in a promoter-dependent manner. Binds to the consensus octamer motif 5'-AT[A/T]A[T/A]T[A/T]A-3' of promoter of target genes. Plays a fundamental role in the gene regulatory network essential for retinal ganglion cell (RGC) differentiation. Binds to an octamer site to form a ternary complex with ISL1; cooperates positively with ISL1 and ISL2 to potentiate transcriptional activation of RGC target genes being involved in RGC fate commitment in the developing retina and RGC axon formation and pathfinding. Inhibits DLX1 and DLX2 transcriptional activities preventing DLX1- and DLX2-mediated ability to promote amacrine cell fate specification. In cooperation with TP53 potentiates transcriptional activation of BAX promoter activity increasing neuronal cell apoptosis. Negatively regulates BAX promoter activity in the absence of TP53. Acts as a transcriptional coactivator via its interaction with the transcription factor ESR1 by enhancing its effect on estrogen response element (ERE)-containing promoter. Antagonizes the transcriptional stimulatory activity of POU4F1 by preventing its binding to an octamer motif. Involved in TNFSF11-mediated terminal osteoclast differentiation. The protein is POU domain, class 4, transcription factor 2 of Mus musculus (Mouse).